Reading from the N-terminus, the 128-residue chain is Small ribosomal subunit protein uS11 (128 aa).

This sequence belongs to the universal ribosomal protein uS11 family. In terms of assembly, part of the 30S ribosomal subunit. Interacts with proteins S7 and S18. Binds to IF-3.

In terms of biological role, located on the platform of the 30S subunit, it bridges several disparate RNA helices of the 16S rRNA. Forms part of the Shine-Dalgarno cleft in the 70S ribosome. The protein is Small ribosomal subunit protein uS11 of Chloroherpeton thalassium (strain ATCC 35110 / GB-78).